The following is a 145-amino-acid chain: Large ribosomal subunit protein uL11 (145 aa).

It belongs to the universal ribosomal protein uL11 family. As to quaternary structure, part of the ribosomal stalk of the 50S ribosomal subunit. Interacts with L10 and the large rRNA to form the base of the stalk. L10 forms an elongated spine to which L12 dimers bind in a sequential fashion forming a multimeric L10(L12)X complex. One or more lysine residues are methylated.

Functionally, forms part of the ribosomal stalk which helps the ribosome interact with GTP-bound translation factors. The chain is Large ribosomal subunit protein uL11 from Aquifex aeolicus (strain VF5).